The chain runs to 161 residues: Nucleotide-binding protein Bd0338 (161 aa).

This sequence belongs to the YajQ family.

In terms of biological role, nucleotide-binding protein. The polypeptide is Nucleotide-binding protein Bd0338 (Bdellovibrio bacteriovorus (strain ATCC 15356 / DSM 50701 / NCIMB 9529 / HD100)).